A 382-amino-acid chain; its full sequence is ATP phosphoribosyltransferase regulatory subunit (382 aa).

Belongs to the class-II aminoacyl-tRNA synthetase family. HisZ subfamily. In terms of assembly, heteromultimer composed of HisG and HisZ subunits.

The protein localises to the cytoplasm. It participates in amino-acid biosynthesis; L-histidine biosynthesis; L-histidine from 5-phospho-alpha-D-ribose 1-diphosphate: step 1/9. In terms of biological role, required for the first step of histidine biosynthesis. May allow the feedback regulation of ATP phosphoribosyltransferase activity by histidine. The sequence is that of ATP phosphoribosyltransferase regulatory subunit from Burkholderia ambifaria (strain MC40-6).